The following is a 383-amino-acid chain: RNA-binding motif, single-stranded-interacting protein 2 (383 aa).

The residue at position 1 (methionine 1) is an N-acetylmethionine. Residues 28-56 (QMAPPSPRNSTPNSSGGGGGGSGGNDQLS) form a disordered region. The span at 42 to 51 (SGGGGGGSGG) shows a compositional bias: gly residues. 2 consecutive RRM domains span residues 58–131 (TNLY…MAKQ) and 137–222 (TNLY…FADG). A Phosphoserine modification is found at serine 108. At serine 287 the chain carries Phosphoserine. Positions 352-383 (SSVSAEESNGQQNQLAVEPPSDHGVYPFQFSK) are disordered.

The protein resides in the nucleus. The sequence is that of RNA-binding motif, single-stranded-interacting protein 2 (Rbms2) from Mus musculus (Mouse).